The following is a 140-amino-acid chain: MAKKVEKVVKLQIPAGKANPAPPVGPALGQAGVNIMGFCKEFNARTQEQAGLIIPVEISVYEDRSFTFITKTPPAPVLLKKAAGVEKGSGEPNKTKVATVTKDQVREIAQTKMQDLNAADEEAAMRIIEGTARSMGITVQ.

Belongs to the universal ribosomal protein uL11 family. As to quaternary structure, part of the ribosomal stalk of the 50S ribosomal subunit. Interacts with L10 and the large rRNA to form the base of the stalk. L10 forms an elongated spine to which L12 dimers bind in a sequential fashion forming a multimeric L10(L12)X complex. In terms of processing, one or more lysine residues are methylated.

Its function is as follows. Forms part of the ribosomal stalk which helps the ribosome interact with GTP-bound translation factors. This chain is Large ribosomal subunit protein uL11, found in Staphylococcus epidermidis (strain ATCC 35984 / DSM 28319 / BCRC 17069 / CCUG 31568 / BM 3577 / RP62A).